Here is a 65-residue protein sequence, read N- to C-terminus: Large ribosomal subunit protein uL29 (65 aa).

It belongs to the universal ribosomal protein uL29 family.

The protein is Large ribosomal subunit protein uL29 (rpmC) of Buchnera aphidicola subsp. Acyrthosiphon pisum (strain APS) (Acyrthosiphon pisum symbiotic bacterium).